The following is a 357-amino-acid chain: Uroporphyrinogen decarboxylase (357 aa).

Substrate contacts are provided by residues 30–34, aspartate 79, tyrosine 154, serine 209, and histidine 336; that span reads RQAGR.

This sequence belongs to the uroporphyrinogen decarboxylase family. In terms of assembly, homodimer.

It localises to the cytoplasm. The catalysed reaction is uroporphyrinogen III + 4 H(+) = coproporphyrinogen III + 4 CO2. Its pathway is porphyrin-containing compound metabolism; protoporphyrin-IX biosynthesis; coproporphyrinogen-III from 5-aminolevulinate: step 4/4. Its function is as follows. Catalyzes the decarboxylation of four acetate groups of uroporphyrinogen-III to yield coproporphyrinogen-III. This is Uroporphyrinogen decarboxylase from Mycobacterium bovis (strain ATCC BAA-935 / AF2122/97).